Reading from the N-terminus, the 455-residue chain is Virion host shutoff protein (455 aa).

Belongs to the herpesviridae VHS protein family.

It localises to the virion. Minor structural protein that acts as an endoribonuclease during lytic infection. Degrades host mRNAs in the cytoplasm by cutting them at preferred sites, including some in regions of translation initiation. This chain is Virion host shutoff protein (17), found in Homo sapiens (Human).